The chain runs to 7839 residues: MALLNGKSTLPNGHNSSIESPNGYTEHEMPIPSDWQRYLIDIDHAAVSLFKSPRPDDPVATVKSTHRFVLTEETLLVSIPSTIYAAFAIVMSEYSNSQDVLFGVRAESRVVPFRVLVDKNDQISSFLDQVASKWKMAQNFPPDMPVPAVPNVLAFVDDKMSASGNGLVLEENEEISMVISLDSKEITIQVLFNPACADLVAVQRFLKQLETVFHQLCKPSAGQLIKEVKSITADDIRDMTTWNSASMTPYTPECIHDVVKQHVLASPNSCAVHGWDGDLSYVQLDEESSRLANYLYRKGVRPHDLVPLAFYKSIWFTICALALSKLGAAIVPLDPQWPKDRQMYIINDIESSRIITNIPNSASAYAGLEIIDISQLSLANEPATARYPVTPEHAIYAYYTSGTTGQPKGCVIEHGAFVSSSSKRIKFMGRNKDSRLLQVTTYTFDVAMDDIFFTLMAGGCLCVPTREECLNDIVGAVEKYNCNTLHVAPSLARDLQPSQLPSLRTLILGGEAMSANILRTWAGRVGLYNSYGPTECCIACCVNLIQSADENPRNIGRPIDCSYWLVRPGDIDTLAAIGTVGEILIHGPNLGRGYLNKPELTAKAFPQNISWASEVGLPAEARFYRTGDLARFNADGSVCLLGRIDDQVKIHGQRIELGEIDYRLSQCLPAGIEAISGVVNFRDREVATLVAFIQTVNSDSNSAKSSGSLALADTDNWNQFHRLRSHVMEQLSHNLPSYMVPSVFLPVQNFLYFNQGKLNRRGMFQQASRFRLDDILTINTSAGHKADDTSSWSAEALVLRQLWAIALGLEEKNIHLDSRFADLGGDSLAAIRLGILCRPYDIELSVDDILQQSTILLQAEMSEKKKKQNIEKHEVAQEAILPAGQRFGLLGQDVDVGMLCEQTSAQCHIDSGAIDDIYPASPLQESLMALSMDDSPYISQFVFRLPDNLDMYRFRKAWKSTFSDIPILRTRIIYLQDFGTLQVVVDEDIEWTEHKNITLSQFLKDDQERLMQVGDRLVRFTIVQESPGTSFLVWTCHHACHDGRTVDQTLRVVGAKYLDRPVSSPVPYRYYIQFQQDVYRRDWQEYWTRNLAGASVSAFPAQDKAVHQPVTDASHQYSFSMPRISTERSDTSVFSPSSILRAAWALIVSRYEESEDVTFGTIVGANASTIADADAIVGPTNNTIPVRVLASEGWTVEAFVSHVKQQFEYSPFQHVGLANLKDLSPEMQDIVNIRNIFVVQSHFVGQTGSEMNLERVAVSAHEGFKYPLVVECFQENASQVLVNFIYDSHILDQSQISRLALQLENTINLLVHNPHKTLNQIEILSPSDVAQILEWQADMPSPSSLCLHQQFFTQVKRSPDAIALCTWEGQFTYLEVQNLVESMAIYLQDAGVRRGDRILCQIEKSACAVISFLAILKLGGTCVLLGTTWPRIRSEVIAEDTKAQYLLVSPTLSNALISLVPNILEVSTSFIQRLPRPTQYVDSVYQPSDLAFILFTSGSTGTPKGVQLAHSGLVTNFASMAQHMQYTSETRLFQFSDFTFDLSIYDIFGMLMVGGCICMPSEQERHEDLMGSMNRMKVNTVTATPSIAKMIKPSSVPTLRCIKLGGEALDSTTLATLAGSLDTENGYGVTECSVWSTCTDRLSPDADPRNVGRGINCYTWIVDAKNPNRLRPIGAVGELILQGPGVALGYVNKPEESKRVFLDALPWSTDKGRSYRTGDLVKYAPDGSLIYVQRKDAQLKIRGQRFESSEVESHLQQCGLPEGNFCVDLVKTQTGPVVVVFLCMNKEVEMKDASKLGVVPLDQQDSSIVDQMAQAMRMLIPRLPGYMIPQAVIPVTQMPVSNSGKLDRRALRSLADGMSPGQLRQLLRPSEDSIYHKRTELETEAERTMAVLWSQVLAIDDSHVFHTDDDFFQLGGHSIALMRLISAGKGHGMSISYRDAFLHPSLGAMSRQATVSDAEEHALPRLIQPFAMAPSDVDGLIQESSRACQVDPQDIVDLYPCTPFQESTMTLSLSKPGLYTAQFVWSLPDTIDLARLRSAWETLVRSDAILRTRLIYSSKYWQVVTRTGIDFALADMSIDSYLEEDKARPIRLGQPLNRLAIIQDQTSATQYLAWTAHHSTYDGHSWSSIQDRLSDLYTQGGSKLPLVPYNVFVDHIVNNPLPETGLSFWKDMMSGARMPSFPKLPLNNDLQSTNSVVTQSVSLPRQTSSDVTVASAIQGAWAILLGQYENSDDVLFAATLSGRNVPVDGIENIAGPTSCTVPMRVRTDPGQSTRSWLRSVQQSYVDAATYGQIGMNEISLVNKDAEVARHIRSLLIVQAITSKTVSGLERIGCTKIETKAKGFLSYALVVECKPSMENNEMEVMVSYDANLLDGPSVYRLVWQLEFTLQQLLSDNCKTIRDLCLISPSDMETISTWNKELPKTVETTVHALFDRRLSQKHSATAISSWDGEMTYVELDNYSSSLAAHLMASGVKPGQYIPLCFEKTMWMVVSMLAVLKAGGACVSLDPNHPSRHHQVILSRVSADIVITSPANKHRFPGNRVLSVSAALMTKIAHEPYAAPLVSAHQPAFVVFTSGTTGEPKGIILEHRALCTSIEAHGQFMEFGPESRVLQFASYTFDVSIAEMLTTLAFGGCICIPSDHARLNNLSGAIKTLRVNQAYLTASVAALLDPDTLNGSLKVLSVGGEQVGQEVLTRWGDRTKLLNMYGPAETTIWCGGKHSVKPDGDAANIGYGVGARMWLTDVNDVQKLAPIGAVGEIVIEGPLLARGYINGNNDVFVESPDWAKAFNVFDGFDQVTGRVYRSGDLGRYQSDGSIAICGRRDTQLKIRGQRVEVSQIEDQLQRLAPDFKCVVGVLRTDTPTLVAFIGLEGPTKDQGLTDSMDLVVRTRDLSEEVRDLMGSLESRLANILPPYSVPAHYLVLRNIPLMTSGKTDRKKLQVIASEHLEHSVDASKPQMLQQVKKIPTTQMEWNLFGLWAQVLGINNLASLGTDDNFFRCGGDSLKAMQLASLASQRGITLQVSDLFKNPVLADLAQAIVLDTPKEIETSPVQDIPDPYSLLPNDTKEQVQAQAALDCDVSPNLIDDIYPCTPLQDGLFALSQKQPGAYVAQFKFSVANRINIRRLRQAWETVCDQAPILRSRLVSTPSGIVQVVLTEDFWWYERHDIDTSAELEQDKAAIGGLGQPLQRFRLVQDVARGQKTLVWTIHHAAFDGWSIERILESVRLVYQDQPIPNPYVPFNAFIRYSSGIVENHESKEFWQSYLSNITPPTFPALPSPSYQALADTVIESKMSNLKLPDSFTLTSILRAAWAIVVSTYQGSDDVVFLTTVFGRNAPLAGIDKIIGPTITTIPIRVKLNDPSTTVDMLLQAVQESATETMAFEQLGLQSIRNLNADCKAACMAQNLLVIQTSRGEDATVPFGGFEKLPDETKGFSTIPFTLECTATSEGGLSIEASFDSKIVDPAQANRIIKTFEHVTQQMCHKHLKLNQVDLISDSDHDLIRNWNSTMPCAKEECIHHRLDRLAVSNPDAEAVCAWDGIFTFKELNSLSNRYAVYLQSQGIKPGNIVPFCFDKSKWVVVAMLAIMKVGAASVTVDPKHPPGRRDGILSAVSASAVVTTSGYTHLFDHNASHGLKTLVLDGKTMDSIADSLQPADIESTPNDAAFVVYTSGSTGTPKAVVIEHRGICTGAFHLAKLIHLGPQTRCLQFAAFTFDQSFGDIFHTLLLGGCVCIPSESDRLNDLVGSILRLRANTAILTPTVACSIDPSELGSHKMDVLTVGGEPVTAEAIRTWAPHVRLFNTYGPAECSVTTIGRPINMQNVTQPANIGRGLGALVWLTYPDDPERLTPIGTVGEILMEGPQLARGYLNDSRNTNAAYITDPAWSHRFPVPGMSTPRRFYRTGDLGQYQADGTIVCLGRRDSQVKLRGQRMELGEVEHHISTYSQSALEIIADVFTPPNGTATLAACISLKGYETKGDECQVEVDEQVLTIFSAMLSGLDSYLSRMLPAYMIPTLYVPVTHIPLTPSGKKDRKSIRLMLARITVDQVQKMRTILGESEPSRPLTEREKDLQQLWVKVLKLDGETVINANTNFFHSGGDSVRAMALVAAARRKGTHLTVAEIFSHPKLCDMAAMTTSLSQKGQPVQLAPYSLLRSTPSADTMSEACGACGVDHSQIQDMYPTTPLQQALVALSIKDSGAYVSNFVFLLPSHLDVELFQRAWECVYVVVSEKVRWNYGDNLEEFVGRQSQKGFKLGQRMAESAIVRQKDGKTFFILILHHAIYDGWSLRRLLEAAEQIYHGQAIPRFVIFNHFVAHVSRSEDNRAPAFWRSYLEGLPKTSFIQQPTTAYKPTADHIISQDVSLRDNFTARSGVTITSLMRAAWAMVLATYNSDQTPDVVFGTVVGGRSLDLADIEYIDGPTIATVPFRVTFDPTAPVDMLLQSVQTMSTQILQHEQFGVQNIIKVSDDGRLACDFETLLVVQDSAEIKASSGFLDMDNIYQRPDRPPGIPLVVECSPSAGNLHLEIHFDAKLLEETQAKRLIRQLAHVIKQLANSVPSLSLSCIDMMNPDDAEEIKSWNKKPPPTFDGCLHEMVLQHSKGCPDRIAIQSWDTSLTYSELDHLSSILAQYLNSLGVRPEDKVPFCMDKSAFAIVAMLAILRSGGCFVPLDMSSPTKRLKNIIKRVNAKFILVSPKTRPLFEDVEGQLVEVTKSMIDGLPELSKSLYIPSATHPAYVLFTSGSTGTPKGVVVEHGAIATSVSSFSSYLGFNPDVRVLQFAPYVFDVSIGEIFACLVSGGCLCIASESSLMDDLPLCIQQLDVNFAVLTPTFARTLTPSEVPSLKTLVLGGEPLRKRDVETWATTVRLFNGYGPTEASVLAMAYRVPDSQSPCNLIGLSVGCRSWIVSPSDPNILPPIGAVGELVLEGNTLARGYLDTESAQGAFIEDPKFLDSLVPEATGSRVYKTGDLVRYNAEGIVEFVSRKDTQVKFHGRRIELEDIEHNAMEAMPEAKHLVVELVRLGNSQQEALALFFHTDNQRTANEKDPILPIGQDLVARLRGVKSNLAVTLPSYMVPSLYIPLSTWPSTSNGKVNRHLLRNLVLHFTSEAAAAYSLHTGDSSALSSDEESQLAQLWATTLNIDARTIGSSDSFFQHGGDSIAAVRLVTLAREQGIGLSVDTLLSKPILRDMALCMTSAQPVRETIVRPFNQIHSHQEEVLLAASQFGVEPAMIEDIYPCSALQNSLMAVSLKNSSAYLSQFVVAIPEGLDIDVLQAAWNTVYSDSPILRTRFYQPSLNNMQHPILQAVVDQKPIWGTEENLDEFLGRDKQTPTGLGSPLTRFTIVVDKTNQERLFVLTAHHAIYDGWSIASTFEKVDMILKGIALPKSVGYNIFIHHLQSLNTQENKAFWSSTLEGATQTLFPQLPSHSYEPATDNSLKHQFAYPADLAPHSTVTMATIVRGAWGLLVSKYCDSPDVVFGTTVNGRMAPIPGIEMVQGPTMATIPFRTRISTNQSVLSYLEQLHVQQIESIPHEQYGLQNIKHLSEPIARVCEFQNLLVIQSSRDSSLSDSGFAFGTVKNMDQGSFSMQGFHNMALVVECSIDSEVIHVTLNFDSNVIPKTQVQRIAHHFEHLILQLQAGSTEPDLKIDQIDHVSPSDQAEILEWNSSIPGSVLCCVHELFESRARLQPSAPAICARDGQLTYFELQAKATTLAAYLSLQGLGRGVLVPLLFEKSCWAVVAMMAVLKAGAANVALNPEHPQARLEDSINATQGEVILCSRKHFELASSFDMQVIVVDEDLFHHIDLPSLASSDPWSPTYPAGPDDPCFVLFTSGTTGKPKGIVINHAAMCSSINGHSSTLRYSTGPGSRNFQFTAYTSDVSIGEIFTSLAVGSCVCVPSDYDRMNNLAGSMRDLNVTWAFLTPSVAALLKPEEVPCLRTLLFGGETATPENISTWADSLYLINSAGPAECCIWTHCNPGISTADIGSNWGYNLGCATWITDPNNPSVLMPIGVTGEMLIEGPNLAQGYLNDPERTQKSFVEIYLAGKKRRLYRTGDLARFMADGKTQFLGRRDTQVKLRGQRVEIGEIENQIRRHIPDSTLVAVEMVRIAEGKSAPLLAAFHAPKDPRAIDDTGDTPQAEVLSAAMVQELGVILDELAAKLAETLPQHMIPTAFIPLTSMPLTASAKTDRNVLSALASTISVEQLSYYALTSAEKQFPSSLAEQQMAKLWQEVLNTKIDIGIHDSFFRIGGDSISAMHLVSRSRAVGISLTVEQIFKNPTLQHMAAIATTFTESMGSTTVEPFSLISPTVTFDIVCSEAQEQCQVTAQQIQDIYPCSALQEGLLALSLKTAGSYLAQMVFEIPDELDLERFKDAWAHMVAKAAPILRTQFFESPSQGHQLMQAVIDAPLEWTYSDKLDEYLMTDSTKIVQLGQPTSRYAIISNTQRYFVFTAHHAVYDGASLGPMFEAVEKIYSENYVSSSSPYSLFVQYLLGMDSDSSKAYWEMSLQGASAPTFPRLPSIGYRPMTNDALKRTIALPARHDTEFTMSSIARAAWSLVVASYSDTDDIVFASTVGGRTLPIAGIENIIGPTLATVPVRVTIDRTASVSDFLTMIQEQSTSMMPHEQYGLQNIKRISPSVSAASDLHNLLVINTSSVEGLGSGGLGLKQVDLGRADGFHNFALSIECTAEADALSLAVSFDDHVIDPRQIRRVVNQFEHMLQQLSTCAIHTRLADMDLTGPADIAEIHLWNSHVPPPQQNYVHTLVEQRVKSQPDSPAVCSWEGELTYRELDELSSSLANHLITAFAVAPGTLIPILFEKSIWTVVTMLAVLKAGGANVPMDPQQPLARLQELAADIGASLAISSSKYQDKAQNVTARSMFVDREVLTTIEKTPICPASTVSYEDPAFILFTSGSTGKPKAILIDHTAFTSSIKGHGEILRYRKGSRNLQFTAYISDVSIGEIFTSLSAGACVCVPSDFERMNDLAGSINRMRVDWAFLTPSVASLLDATKVPSLKTLVFGGETATPENIAAWAPRLFLINSFGPAECSIWTHCDPGVGITHNGSHIGYAIGCATWIVDPNDYNKLAPIGSIGELIVEGPNVARGYLDEAKTKEAFLKTAAWMPSGRKNRLYKMGDLVRYLPDGKIQFLGRKDSQIKLHGQRIELGEIEHQLRVALAKHDADRNVQVAVEMVSLSTDTSTSSLLTAFVDYEGISSDDGPAQLSSGEKAQQWARQMFRVAHEHLALTLPRHMIPSVLLPLTRMPLNGSAKTDRKVLKQIVSGMDTMQRALYSLARVETNIIKAATPNEKTLHHIWSEILSISPESFGVEANFMSLGGDSIAAMKLIPIAQAAGLSISVEDLFTRPVLHDLARVSRQSITEHSQDIPPFYIMEQAQNQDELLAEASTHCNLPPDAIHDIYPCTQVQERFISTTQIQPGAYTLQDVFKISSDMDLAQFKKAWTRTVASHVALRTRIFLSNDRHQHLQVVQKASETLDWIHSENLEEYLKADKAKSMEYGGSLVRSAIVSEGVERHFVVTYHHSIYDAVSLGIIMNDLEAFYLDDLYEVNEPKYNAFVHHLTQVKSQELSSQFWRDHLAGDRSTITPLYQPVDGARVDSLLRHTITFPMHYQQSQLSLTVAAFTYAALSLVTARLTGSSSAVLELTLLGRSVPVKGIERMVGTTVTSAPLRIDTTAGNDKPWTVTVEDYLDYAKKRASSIVLHEHTSMPDPETKHITSAALPIVVHPSNPHKEALGTGIGLQRHEIQSMGQNSSAFYMDIAALDGEGLEINLPFDMPLDEVTRNVDHETDLRMCDIIEQEFRGYIILALVNRLNFVPSCWTMGRWLNEAPRSTY.

Positions 1–23 are enriched in polar residues; sequence MALLNGKSTLPNGHNSSIESPNG. Positions 1–26 are disordered; the sequence is MALLNGKSTLPNGHNSSIESPNGYTE. Residues 264–650 form an adenylation 1 region; that stretch reads LASPNSCAVH…LGRIDDQVKI (387 aa). Residues 793 to 866 enclose the Carrier 1 domain; it reads SAEALVLRQL…LQAEMSEKKK (74 aa). At Ser827 the chain carries O-(pantetheine 4'-phosphoryl)serine. Residues 916-1332 form a condensation 1 region; that stretch reads DIYPASPLQE…ILSPSDVAQI (417 aa). Residues 1351-1742 are adenylation 2; sequence FFTQVKRSPD…QRKDAQLKIR (392 aa). One can recognise a Carrier 2 domain in the interval 1880-1957; sequence ELETEAERTM…AMSRQATVSD (78 aa). Ser1918 carries the post-translational modification O-(pantetheine 4'-phosphoryl)serine. Residues 1997–2413 form a condensation 2 region; that stretch reads DLYPCTPFQE…LISPSDMETI (417 aa). The segment at 2432 to 2828 is adenylation 3; the sequence is FDRRLSQKHS…GRRDTQLKIR (397 aa). Positions 2963–3040 constitute a Carrier 3 domain; sequence IPTTQMEWNL…DLAQAIVLDT (78 aa). Ser3001 bears the O-(pantetheine 4'-phosphoryl)serine mark. Residues 3084–3496 form a condensation 3 region; that stretch reads DIYPCTPLQD…QVDLISDSDH (413 aa). The interval 3520-3923 is adenylation 4; it reads RLAVSNPDAE…GRRDSQVKLR (404 aa). The region spanning 4057–4134 is the Carrier 4 domain; sequence RPLTEREKDL…DMAAMTTSLS (78 aa). Ser4095 is subject to O-(pantetheine 4'-phosphoryl)serine. The interval 4234-4569 is condensation 4; it reads NLEEFVGRQS…MMNPDDAEEI (336 aa). The segment at 4591–4982 is adenylation 5; the sequence is HSKGCPDRIA…VSRKDTQVKF (392 aa). One can recognise a Carrier 5 domain in the interval 5113–5189; it reads ALSSDEESQL…DMALCMTSAQ (77 aa). O-(pantetheine 4'-phosphoryl)serine is present on Ser5150. The segment at 5224-5653 is condensation 5; sequence EDIYPCSALQ…VSPSDQAEIL (430 aa). The adenylation 6 stretch occupies residues 5671 to 6069; the sequence is FESRARLQPS…GRRDTQVKLR (399 aa). In terms of domain architecture, Carrier 6 spans 6207 to 6282; that stretch reads FPSSLAEQQM…HMAAIATTFT (76 aa). Ser6243 is modified (O-(pantetheine 4'-phosphoryl)serine). The condensation 6 stretch occupies residues 6321-6730; that stretch reads QDIYPCSALQ…RLADMDLTGP (410 aa). The tract at residues 6756 to 7147 is adenylation 7; sequence EQRVKSQPDS…LGRKDSQIKL (392 aa). Residues 7290 to 7366 form the Carrier 7 domain; the sequence is KAATPNEKTL…DLARVSRQSI (77 aa). Ser7327 carries the post-translational modification O-(pantetheine 4'-phosphoryl)serine. A condensation7 region spans residues 7404–7704; it reads HDIYPCTQVQ…LDYAKKRASS (301 aa).

The protein belongs to the NRP synthetase family.

It participates in mycotoxin biosynthesis. Its function is as follows. Nonribosomal peptide synthetase; part of the gene cluster that mediates the biosynthesis of gramillins A and B, bicyclic lipopeptides that induce cell death in maize leaves but not in wheat leaves. The nonribosomal peptide synthetase GRA1 incorporates respectively a glutamic adic (Glu), a leucine (Leu), a serine (Ser), a hydroxyglutamine (HOGln), a 2-amino decanoic acid, and 2 cysteins (CysB and CysA). The biosynthesis of 2-amino decanoic acid incorporated in gramillins could be initiated by a fatty acid synthase composed of the alpha and beta subunits FGSG_00036 and FGSG_11656. The cytochrome P450 monooxygenase FGSG_15680 could hydroxylate the fatty acid chain. Subsequent oxidation to the ketone by the oxidoreductase FGSG_00048 and transamination by aminotransferase FGSG_00049 could form 2-amino-decanoic acid. On the other hand, FGSG_15680 could also be responsible for the HO-modified glutamine at the gamma-position. Whether hydroxylation occurs on the fully assembled product or on the Gln residue prior to assembly into the gramillins requires further proof. The thioredoxin FGSG_00043 could also be required for the disulfide-bond formation between CysA and CysB. The specific involvement of the remaining proteins from the cluster is more difficult to discern, but could have broader regulatory (FGSG_00040 and FGSG_11657) or enzymatic functions (FGSG_00044 and FGSG_00045). The final C-domain of GRA1 does not possess the expected sequence of a termination CT domain, often implicated in macrocyclization and release of a cyclopeptidein fungal NRPs; and the thioesterase FGSG_00047 may act in concert with the terminal C-domain of GRA1 to catalyze the formation of the macrocyclic anhydride and release of the products. The chain is Nonribosomal peptide synthetase GRA1 from Gibberella zeae (strain ATCC MYA-4620 / CBS 123657 / FGSC 9075 / NRRL 31084 / PH-1) (Wheat head blight fungus).